Reading from the N-terminus, the 265-residue chain is 3-methyl-2-oxobutanoate hydroxymethyltransferase (265 aa).

2 residues coordinate Mg(2+): aspartate 43 and aspartate 82. 3-methyl-2-oxobutanoate contacts are provided by residues 43–44 (DS), aspartate 82, and lysine 111. Glutamate 113 is a Mg(2+) binding site. Glutamate 180 acts as the Proton acceptor in catalysis.

The protein belongs to the PanB family. In terms of assembly, homodecamer; pentamer of dimers. The cofactor is Mg(2+).

The protein localises to the cytoplasm. It catalyses the reaction 3-methyl-2-oxobutanoate + (6R)-5,10-methylene-5,6,7,8-tetrahydrofolate + H2O = 2-dehydropantoate + (6S)-5,6,7,8-tetrahydrofolate. The protein operates within cofactor biosynthesis; (R)-pantothenate biosynthesis; (R)-pantoate from 3-methyl-2-oxobutanoate: step 1/2. In terms of biological role, catalyzes the reversible reaction in which hydroxymethyl group from 5,10-methylenetetrahydrofolate is transferred onto alpha-ketoisovalerate to form ketopantoate. In Francisella tularensis subsp. mediasiatica (strain FSC147), this protein is 3-methyl-2-oxobutanoate hydroxymethyltransferase.